The chain runs to 295 residues: Protoheme IX farnesyltransferase 2 (295 aa).

A run of 9 helical transmembrane segments spans residues 9–29 (ITKP…FFLA), 36–56 (FALF…GCVF), 83–103 (LTLA…LLYV), 108–128 (LSAF…SLWL), 135–155 (GTLV…CAVS), 163–183 (VTLL…IAIF), 209–229 (IVLY…GGYA), 230–250 (GLGY…MAWG), and 264–284 (VFGF…VDSQ).

The protein belongs to the UbiA prenyltransferase family. Protoheme IX farnesyltransferase subfamily.

It localises to the cell inner membrane. The enzyme catalyses heme b + (2E,6E)-farnesyl diphosphate + H2O = Fe(II)-heme o + diphosphate. Its pathway is porphyrin-containing compound metabolism; heme O biosynthesis; heme O from protoheme: step 1/1. In terms of biological role, converts heme B (protoheme IX) to heme O by substitution of the vinyl group on carbon 2 of heme B porphyrin ring with a hydroxyethyl farnesyl side group. This is Protoheme IX farnesyltransferase 2 from Pseudomonas putida (strain W619).